A 571-amino-acid polypeptide reads, in one-letter code: Sporulation-specific protein 1 (571 aa).

Disordered regions lie at residues 1 to 53 (MRSS…EEDV), 67 to 133 (MTAF…PYRQ), and 482 to 501 (KEAKNISSSTAEVPSISQPE). Basic residues predominate over residues 23–37 (SKQKKPTKFRERMRR). Polar residues-rich tracts occupy residues 67 to 86 (MTAFNNNDNGEVQDVTNNFF), 95 to 121 (PVQSSVKTFLTGNNDEDSNFQQNQNPK), and 486 to 499 (NISSSTAEVPSISQ). Coiled coils occupy residues 469-486 (DQLVELLAQEKEEKEAKN) and 542-566 (ESASEESKVLAAALNDAKQNLDENV).

Interacts directly with ADY3. Probable component of a spindle pole body (SPB) complex composed of ADY3, SSP1, DON1, MPC54, SPO21/MPC70, NUD1 and CNM67. Phosphorylated.

It is found in the prospore membrane. Functionally, involved in the pathway that organizes the shaping and sizing of the prospore membrane (PSM) during sporulation. May be required for the formation of ADY3 and DON1-containing protein coats at the leading edge of the PSMs during meiosis II. The polypeptide is Sporulation-specific protein 1 (SSP1) (Saccharomyces cerevisiae (strain ATCC 204508 / S288c) (Baker's yeast)).